We begin with the raw amino-acid sequence, 818 residues long: G-type lectin S-receptor-like serine/threonine-protein kinase At1g67520 (818 aa).

An N-terminal signal peptide occupies residues 1–22 (MCSNGIFVSLLTLSLLLGKSCS). The Extracellular segment spans residues 23-387 (ETDTLHQGQF…NENKKVAAWH (365 aa)). The Bulb-type lectin domain occupies 24–149 (TDTLHQGQFL…DADGSMKRVL (126 aa)). N-linked (GlcNAc...) asparagine glycosylation is found at Asn123, Asn199, and Asn337. In terms of domain architecture, PAN spans 290-379 (CLAAGYVVRD…PRTIYIRGNE (90 aa)). 2 cysteine pairs are disulfide-bonded: Cys330–Cys353 and Cys334–Cys340. A helical membrane pass occupies residues 388 to 408 (IVVATLFLMTPIIWFIIYLVL). The Cytoplasmic segment spans residues 409–818 (RKFNVKGRNC…SITITVLEAR (410 aa)). Residues 496-785 (FSDENKLGEG…ALSLPKEPAF (290 aa)) form the Protein kinase domain. ATP contacts are provided by residues 502–510 (LGEGGFGPV) and Lys524. Ser530 is modified (phosphoserine). Residues 585–602 (LRKNVLDWTLRFRIMEGI) form a caM-binding region. The Proton acceptor role is filled by Asp621. Ser625 and Ser638 each carry phosphoserine. Thr655 bears the Phosphothreonine mark. Phosphoserine occurs at positions 699 and 807. Thr813 carries the phosphothreonine modification.

Belongs to the protein kinase superfamily. Ser/Thr protein kinase family.

The protein localises to the cell membrane. It catalyses the reaction L-seryl-[protein] + ATP = O-phospho-L-seryl-[protein] + ADP + H(+). The enzyme catalyses L-threonyl-[protein] + ATP = O-phospho-L-threonyl-[protein] + ADP + H(+). This is G-type lectin S-receptor-like serine/threonine-protein kinase At1g67520 from Arabidopsis thaliana (Mouse-ear cress).